Here is a 358-residue protein sequence, read N- to C-terminus: Biotin synthase (358 aa).

Residues 47 to 306 form the Radical SAM core domain; that stretch reads KNNSKIKLCA…ALYKIIMPYA (260 aa). Residues Cys65, Cys69, and Cys72 each contribute to the [4Fe-4S] cluster site. Ser142, Cys174, Cys233, and Arg309 together coordinate [2Fe-2S] cluster.

It belongs to the radical SAM superfamily. Biotin synthase family. As to quaternary structure, homodimer. [4Fe-4S] cluster serves as cofactor. [2Fe-2S] cluster is required as a cofactor.

The catalysed reaction is (4R,5S)-dethiobiotin + (sulfur carrier)-SH + 2 reduced [2Fe-2S]-[ferredoxin] + 2 S-adenosyl-L-methionine = (sulfur carrier)-H + biotin + 2 5'-deoxyadenosine + 2 L-methionine + 2 oxidized [2Fe-2S]-[ferredoxin]. It participates in cofactor biosynthesis; biotin biosynthesis; biotin from 7,8-diaminononanoate: step 2/2. Its function is as follows. Catalyzes the conversion of dethiobiotin (DTB) to biotin by the insertion of a sulfur atom into dethiobiotin via a radical-based mechanism. This Methanocaldococcus jannaschii (strain ATCC 43067 / DSM 2661 / JAL-1 / JCM 10045 / NBRC 100440) (Methanococcus jannaschii) protein is Biotin synthase.